A 110-amino-acid polypeptide reads, in one-letter code: Integration host factor subunit alpha (110 aa).

The protein belongs to the bacterial histone-like protein family. Heterodimer of an alpha and a beta chain.

In terms of biological role, this protein is one of the two subunits of integration host factor, a specific DNA-binding protein that functions in genetic recombination as well as in transcriptional and translational control. The polypeptide is Integration host factor subunit alpha (Bdellovibrio bacteriovorus (strain ATCC 15356 / DSM 50701 / NCIMB 9529 / HD100)).